Reading from the N-terminus, the 354-residue chain is Uroporphyrinogen decarboxylase (354 aa).

Residues 27-31 (RQAGR), aspartate 77, tyrosine 154, serine 209, and histidine 327 each bind substrate.

The protein belongs to the uroporphyrinogen decarboxylase family. Homodimer.

The protein resides in the cytoplasm. The enzyme catalyses uroporphyrinogen III + 4 H(+) = coproporphyrinogen III + 4 CO2. Its pathway is porphyrin-containing compound metabolism; protoporphyrin-IX biosynthesis; coproporphyrinogen-III from 5-aminolevulinate: step 4/4. Its function is as follows. Catalyzes the decarboxylation of four acetate groups of uroporphyrinogen-III to yield coproporphyrinogen-III. This chain is Uroporphyrinogen decarboxylase, found in Saccharophagus degradans (strain 2-40 / ATCC 43961 / DSM 17024).